The primary structure comprises 3159 residues: E1A-binding protein p400 (3159 aa).

A compositionally biased stretch (polar residues) spans Met1 to Arg16. Disordered stretches follow at residues Met1–Ser65, Ser125–Ala154, Pro212–Thr261, Val282–Pro359, Leu545–Pro594, Gln633–Ala658, and Thr684–Thr770. A compositionally biased stretch (pro residues) spans His31 to Pro41. A compositionally biased stretch (low complexity) spans Phe42–Ser55. Ser53 is modified (phosphoserine). Polar residues predominate over residues Tyr56–Ser65. Composition is skewed to low complexity over residues Ser125–Thr137 and Leu237–Pro256. Position 135 is a phosphoserine (Ser135). A phosphoserine mark is found at Ser315 and Ser321. The segment covering Gln558–Gln571 has biased composition (low complexity). The span at Tyr572 to Ser585 shows a compositional bias: polar residues. Pro residues-rich tracts occupy residues Val637 to Gln653 and Asp689 to Leu698. Over residues Pro699–Gly711 the composition is skewed to low complexity. Composition is skewed to polar residues over residues Asn725–Thr742 and Thr751–Ala760. Ser736 and Ser755 each carry phosphoserine. Residues Thr761–Thr770 are compositionally biased toward low complexity. The 73-residue stretch at Leu799–Ala871 folds into the HSA domain. 2 disordered regions span residues Glu915–Asp967 and Ser997–Glu1024. Phosphoserine is present on residues Ser928 and Ser941. A Phosphothreonine modification is found at Thr945. Composition is skewed to acidic residues over residues Thr945–Asn962 and Glu1008–Cys1019. The segment at Asp951–Gln1365 is interactions with RUVBL1 and RUVBL2. The residue at position 1011 (Ser1011) is a Phosphoserine. One can recognise a Helicase ATP-binding domain in the interval Ala1103–Gly1268. Asp1116–Thr1123 contributes to the ATP binding site. The short motif at Asp1219 to Gln1222 is the DEAH box-like element. The tract at residues Val1467 to Ser1582 is disordered. At Lys1472 the chain carries N6-acetyllysine. Low complexity-rich tracts occupy residues Pro1481–Pro1498 and Pro1538–Pro1565. Residues Ser1547, Ser1728, and Ser1732 each carry the phosphoserine modification. The disordered stretch occupies residues Gly1787 to Ser1807. Residues Leu1789 to Gly1798 are compositionally biased toward basic and acidic residues. Residues Lys1899–Thr2056 form the Helicase C-terminal domain. Disordered stretches follow at residues Lys2119 to Glu2144 and Lys2287 to Val2311. An N6-acetyllysine mark is found at Lys2349 and Lys2356. Positions Glu2360 to Ile2429 constitute a Myb-like domain. Disordered regions lie at residues Lys2524–Ala2602 and Thr2665–Ala2688. The interaction with ZNF42 stretch occupies residues Lys2524 to Ser2789. Low complexity predominate over residues Ala2530–Val2540. 2 stretches are compositionally biased toward pro residues: residues Ala2541 to Gln2563 and Pro2572 to Gln2589. Low complexity predominate over residues Pro2590–Ala2602. A Phosphoserine modification is found at Ser2686. Thr2813 is subject to Phosphothreonine. Disordered regions lie at residues Gln2821–Arg2869 and Ala3115–Gln3159. The span at Pro2828 to Pro2843 shows a compositional bias: pro residues. Low complexity predominate over residues Thr2844–Thr2866. Residues Pro3129–Lys3140 show a composition bias toward polar residues.

This sequence belongs to the SNF2/RAD54 helicase family. SWR1 subfamily. In terms of assembly, component of the NuA4 histone acetyltransferase complex which contains the catalytic subunit KAT5/TIP60 and the subunits EP400, TRRAP/PAF400, BRD8/SMAP, EPC1, DMAP1/DNMAP1, RUVBL1/TIP49, RUVBL2, ING3, actin, ACTL6A/BAF53A, MORF4L1/MRG15, MORF4L2/MRGX, MRGBP, YEATS4/GAS41, VPS72/YL1 and MEAF6. May also participate in the formation of NuA4 related complexes which lack the KAT5/TIP60 catalytic subunit, but which include the SWI/SNF related protein SRCAP. The NuA4 complex interacts with MYC and the adenovirus E1A protein. EP400 interacts with TRRAP, RUVBL1 and RUVBL2. Component of a SWR1-like complex. Interacts with ZNF42. Interacts with PHF5A. Interacts with human cytomegalovirus UL27. Interacts with human adenovirus 5 E1A protein; this interaction stabilizes MYC. In terms of tissue distribution, ubiquitously expressed.

The protein localises to the nucleus. Functionally, component of the NuA4 histone acetyltransferase complex which is involved in transcriptional activation of select genes principally by acetylation of nucleosomal histones H4 and H2A. This modification may both alter nucleosome - DNA interactions and promote interaction of the modified histones with other proteins which positively regulate transcription. May be required for transcriptional activation of E2F1 and MYC target genes during cellular proliferation. The NuA4 complex ATPase and helicase activities seem to be, at least in part, contributed by the association of RUVBL1 and RUVBL2 with EP400. May regulate ZNF42 transcription activity. Component of a SWR1-like complex that specifically mediates the removal of histone H2A.Z/H2AZ1 from the nucleosome. The protein is E1A-binding protein p400 (EP400) of Homo sapiens (Human).